The following is a 195-amino-acid chain: Dephospho-CoA kinase (195 aa).

The 193-residue stretch at 3-195 (IVGLTGGIGS…IALHENYLNH (193 aa)) folds into the DPCK domain. 11-16 (GSGKSA) is a binding site for ATP.

It belongs to the CoaE family.

The protein localises to the cytoplasm. It catalyses the reaction 3'-dephospho-CoA + ATP = ADP + CoA + H(+). It participates in cofactor biosynthesis; coenzyme A biosynthesis; CoA from (R)-pantothenate: step 5/5. In terms of biological role, catalyzes the phosphorylation of the 3'-hydroxyl group of dephosphocoenzyme A to form coenzyme A. The chain is Dephospho-CoA kinase from Acinetobacter baylyi (strain ATCC 33305 / BD413 / ADP1).